We begin with the raw amino-acid sequence, 160 residues long: Calcium-binding protein CP1 (160 aa).

EF-hand domains are found at residues 22–49 (AFEI…IPSG), 52–87 (NDET…TPFS), and 93–128 (GDDG…AGLA). Residues Asp27, Asp29, Asp31, Lys33, Asp38, Asp65, Asn67, Asp69, Glu76, Asp106, Asp108, Asp110, Arg112, and Asp117 each contribute to the Ca(2+) site.

As to expression, expressed in roots and flowers.

Its subcellular location is the cytoplasm. The protein localises to the cytosol. Binds calcium in vitro. The chain is Calcium-binding protein CP1 from Arabidopsis thaliana (Mouse-ear cress).